We begin with the raw amino-acid sequence, 276 residues long: RRP15-like protein (276 aa).

Disordered regions lie at residues 1–132 (MALL…QLRV) and 201–276 (KRAK…DGEE). Basic and acidic residues-rich tracts occupy residues 75–95 (FQKD…KADV) and 226–245 (KGSS…DFMT). A compositionally biased stretch (acidic residues) spans 254–276 (EEDDDEEGHNDEADDSDYDDGEE). A Phosphoserine modification is found at S269. Position 271 is a phosphotyrosine (Y271).

This sequence belongs to the RRP15 family.

The sequence is that of RRP15-like protein from Drosophila melanogaster (Fruit fly).